A 734-amino-acid chain; its full sequence is 1,4-alpha-glucan branching enzyme GlgB (734 aa).

Asp-414 acts as the Nucleophile in catalysis. The active-site Proton donor is Glu-467.

The protein belongs to the glycosyl hydrolase 13 family. GlgB subfamily. Monomer.

It catalyses the reaction Transfers a segment of a (1-&gt;4)-alpha-D-glucan chain to a primary hydroxy group in a similar glucan chain.. The protein operates within glycan biosynthesis; glycogen biosynthesis. In terms of biological role, catalyzes the formation of the alpha-1,6-glucosidic linkages in glycogen by scission of a 1,4-alpha-linked oligosaccharide from growing alpha-1,4-glucan chains and the subsequent attachment of the oligosaccharide to the alpha-1,6 position. The polypeptide is 1,4-alpha-glucan branching enzyme GlgB (Myxococcus xanthus (strain DK1622)).